Reading from the N-terminus, the 157-residue chain is Selenoprotein F (157 aa).

Residues 1–19 (MSGEVYILWLLSLIQTLSA) form the signal peptide. Residue Sec84 is a non-standard amino acid, selenocysteine.

It belongs to the selenoprotein M/F family. In terms of tissue distribution, expressed in the brain, liver and retina. Localized to the retinal ganglion cell layer, the inner nuclear layer and the outer nuclear layer at both parr and smolt stages.

It is found in the endoplasmic reticulum lumen. Functionally, may be involved in redox reactions associated with the formation of disulfide bonds. May contribute to the quality control of protein folding in the endoplasmic reticulum. May be involved in retinal development. This is Selenoprotein F from Oncorhynchus mykiss (Rainbow trout).